The chain runs to 827 residues: SH3-containing GRB2-like protein 3-interacting protein 1 (827 aa).

Disordered regions lie at residues 1 to 116, 143 to 199, and 223 to 278; these read MMEG…SHKK, IGNI…ALAP, and IWGS…QAAT. Composition is skewed to basic and acidic residues over residues 16–32 and 40–53; these read RKKEKDTDSTGSPDRDG and LPYHSKAECAREGG. 8 positions are modified to phosphoserine: S78, S104, S105, S107, S149, S151, S156, and S169. 2 positions are modified to phosphothreonine: T180 and T182. Residue S236 is modified to Phosphoserine. The span at 245–260 shows a compositional bias: pro residues; it reads TGTPPPLPPKTVPATP. Residues T247 and T259 each carry the phosphothreonine modification. S265, S287, S289, S300, S316, and S319 each carry phosphoserine. Residues 265–276 are compositionally biased toward polar residues; that stretch reads SPLTVATGNDQA. Residues 315–505 form a disordered region; that stretch reads FSDASPEHVT…IAPLARAEST (191 aa). Residues 319-333 are compositionally biased toward basic and acidic residues; the sequence is SPEHVTPELTPREKV. A phosphothreonine mark is found at T324, T328, and T335. Positions 335–345 are enriched in low complexity; that stretch reads TPPAASDIPAD. Residues 346–369 show a composition bias toward pro residues; sequence SPTPGPPGPPGSAGPPGPPGPRNV. The residue at position 371 (S371) is a Phosphoserine. A compositionally biased stretch (basic and acidic residues) spans 377 to 392; it reads EVQKKVAEQTFIKDDY. S398 bears the Phosphoserine mark. The residue at position 409 (T409) is a Phosphothreonine. Low complexity predominate over residues 436–455; that stretch reads ASGASSPARPATPLVPCSCS. Residues 456 to 474 show a composition bias toward pro residues; it reads TPPPPPPRPPSRPKLPPGK. A compositionally biased stretch (low complexity) spans 481 to 491; the sequence is SRPFSPPIHSS. S485 bears the Phosphoserine mark. Positions 558–826 constitute an MHD domain; sequence TLPVAAAFTE…RFAAGKYLAD (269 aa). Interaction with DPF motifs-containing proteins stretches follow at residues 560–566, 592–594, 666–669, and 812–817; these read PVAAAFT, SFP, TYYN, and SLIKKR. The necessary and sufficient to mediate interaction with CANX stretch occupies residues 648 to 827; the sequence is MPNLMTHLKK…FAAGKYLADN (180 aa).

As to quaternary structure, interacts with proteins essential or regulating the formation of functional clathrin-coated pits. Interacts with CANX. Interacts with AP2A1. Interacts with EPS15. Interacts with SH3GL3. Interacts with AMPH. Interacts with ITSN1 (via SH3 domains). Interacts with and REPS1. In terms of tissue distribution, specifically expressed in brain. Also detected at lower levels in spleen and adipose tissue.

The protein resides in the membrane. It is found in the clathrin-coated pit. May function in clathrin-mediated endocytosis. Has both a membrane binding/tubulating activity and the ability to recruit proteins essential to the formation of functional clathrin-coated pits. Has a preference for membranes enriched in phosphatidylserine and phosphoinositides and is required for the endocytosis of the transferrin receptor. May also bind tubulin. May play a role in the regulation of energy homeostasis. This is SH3-containing GRB2-like protein 3-interacting protein 1 (SGIP1) from Psammomys obesus (Fat sand rat).